Reading from the N-terminus, the 1667-residue chain is Androglobin (1667 aa).

Residues 1–11 (MASKQTKKKEV) are compositionally biased toward basic residues. 3 disordered regions span residues 1-45 (MASK…KGKF), 347-387 (SLTT…KFSL), and 540-566 (GSDL…ITKA). A Calpain catalytic domain is found at 70–411 (KDKTGKSPVF…SLSDCSSAIQ (342 aa)). Basic and acidic residues predominate over residues 353–384 (APEKSDKVPKEKADARDIGKKRSKDGEKEKFK). Polar residues predominate over residues 554-566 (THSQTDLSQITKA). The 128-residue stretch at 763 to 890 (HICSMVSFVI…EEVSLVEWLD (128 aa)) folds into the Globin; C-terminal part domain. 2 residues coordinate heme b: Q792 and H824. In terms of domain architecture, IQ spans 906–935 (EVAAAIKIQAMWRGTYVRLLMKARIPDTKE). In terms of domain architecture, Globin; N-terminal part spans 936–968 (NISVADTLQKVWAVLEMNLEQYAVSLLRLMFKS). 2 disordered regions span residues 1297-1355 (INLG…QQED) and 1420-1522 (TSDA…RSPT). A compositionally biased stretch (polar residues) spans 1301 to 1315 (SPDSHTISEGQKSSV). Composition is skewed to basic and acidic residues over residues 1325-1340 (EKSS…KQAP) and 1433-1450 (TKPK…KEPN). Residues 1451-1468 (SKNSAGSESKEMTQTGSG) are compositionally biased toward polar residues. Residues 1487-1498 (STSSESGGVSSP) show a composition bias toward low complexity. The segment covering 1499 to 1511 (GKEEREQSTRKEN) has biased composition (basic and acidic residues). Residues 1512–1522 (IQTGPRTRSPT) are compositionally biased toward polar residues. Positions 1588–1629 (QEERLKLKDEVLDMYKEMQDSLDEARQKIFDIREEYRNKLLE) form a coiled coil. Positions 1646–1667 (KLETEKMTPAPDTQKKKKGKKK) are disordered.

The protein in the central section; belongs to the globin family. It in the N-terminal section; belongs to the peptidase C2 family. As to quaternary structure, interacts with septin SEPT10; contributes to in vitro proteolytic cleavage of SEPT10 in a calmodulin-dependent manner. Interacts with CFAP69. Interacts with SPEF2. May interact with calmodulin.

It localises to the cell projection. The protein localises to the cilium. Its subcellular location is the flagellum. Its function is as follows. Probable chimeric globin with a bis-histidyl six-coordinate heme-iron atom through which it could bind dioxygen, carbon monoxide and nitric oxide. Required for sperm flagellum formation and maturation of elongating spermatids, thus playing an essential role in male fertility. This chain is Androglobin, found in Homo sapiens (Human).